The following is a 235-amino-acid chain: ATP-dependent Clp protease proteolytic subunit (235 aa).

Ser-123 (nucleophile) is an active-site residue. His-148 is a catalytic residue.

Belongs to the peptidase S14 family. In terms of assembly, fourteen ClpP subunits assemble into 2 heptameric rings which stack back to back to give a disk-like structure with a central cavity, resembling the structure of eukaryotic proteasomes.

It localises to the cytoplasm. It carries out the reaction Hydrolysis of proteins to small peptides in the presence of ATP and magnesium. alpha-casein is the usual test substrate. In the absence of ATP, only oligopeptides shorter than five residues are hydrolyzed (such as succinyl-Leu-Tyr-|-NHMec, and Leu-Tyr-Leu-|-Tyr-Trp, in which cleavage of the -Tyr-|-Leu- and -Tyr-|-Trp bonds also occurs).. Cleaves peptides in various proteins in a process that requires ATP hydrolysis. Has a chymotrypsin-like activity. Plays a major role in the degradation of misfolded proteins. This is ATP-dependent Clp protease proteolytic subunit from Novosphingobium aromaticivorans (strain ATCC 700278 / DSM 12444 / CCUG 56034 / CIP 105152 / NBRC 16084 / F199).